The sequence spans 286 residues: 4-diphosphocytidyl-2-C-methyl-D-erythritol kinase (286 aa).

Lysine 8 is a catalytic residue. ATP is bound at residue proline 92–threonine 102. The active site involves aspartate 134.

Belongs to the GHMP kinase family. IspE subfamily.

The enzyme catalyses 4-CDP-2-C-methyl-D-erythritol + ATP = 4-CDP-2-C-methyl-D-erythritol 2-phosphate + ADP + H(+). The protein operates within isoprenoid biosynthesis; isopentenyl diphosphate biosynthesis via DXP pathway; isopentenyl diphosphate from 1-deoxy-D-xylulose 5-phosphate: step 3/6. Its function is as follows. Catalyzes the phosphorylation of the position 2 hydroxy group of 4-diphosphocytidyl-2C-methyl-D-erythritol. This Caldicellulosiruptor bescii (strain ATCC BAA-1888 / DSM 6725 / KCTC 15123 / Z-1320) (Anaerocellum thermophilum) protein is 4-diphosphocytidyl-2-C-methyl-D-erythritol kinase.